The sequence spans 470 residues: Glucose-1-phosphate adenylyltransferase (470 aa).

Alpha-D-glucose 1-phosphate-binding positions include glycine 164, 181–182, and serine 199; that span reads EK.

This sequence belongs to the bacterial/plant glucose-1-phosphate adenylyltransferase family. In terms of assembly, homotetramer.

The catalysed reaction is alpha-D-glucose 1-phosphate + ATP + H(+) = ADP-alpha-D-glucose + diphosphate. Its pathway is glycan biosynthesis; glycogen biosynthesis. In terms of biological role, involved in the biosynthesis of ADP-glucose, a building block required for the elongation reactions to produce glycogen. Catalyzes the reaction between ATP and alpha-D-glucose 1-phosphate (G1P) to produce pyrophosphate and ADP-Glc. This chain is Glucose-1-phosphate adenylyltransferase, found in Pseudarthrobacter chlorophenolicus (strain ATCC 700700 / DSM 12829 / CIP 107037 / JCM 12360 / KCTC 9906 / NCIMB 13794 / A6) (Arthrobacter chlorophenolicus).